We begin with the raw amino-acid sequence, 251 residues long: Triosephosphate isomerase (251 aa).

Asn9 to Lys11 contacts substrate. The Electrophile role is filled by His95. Glu167 functions as the Proton acceptor in the catalytic mechanism. Residues Gly173, Ser212, and Gly233 to Gly234 each bind substrate.

The protein belongs to the triosephosphate isomerase family. In terms of assembly, homodimer.

Its subcellular location is the cytoplasm. It catalyses the reaction D-glyceraldehyde 3-phosphate = dihydroxyacetone phosphate. The protein operates within carbohydrate biosynthesis; gluconeogenesis. It functions in the pathway carbohydrate degradation; glycolysis; D-glyceraldehyde 3-phosphate from glycerone phosphate: step 1/1. Involved in the gluconeogenesis. Catalyzes stereospecifically the conversion of dihydroxyacetone phosphate (DHAP) to D-glyceraldehyde-3-phosphate (G3P). The chain is Triosephosphate isomerase from Ectopseudomonas mendocina (strain ymp) (Pseudomonas mendocina).